The primary structure comprises 91 residues: UPF0147 protein APE_2336a (91 aa).

This sequence belongs to the UPF0147 family.

In Aeropyrum pernix (strain ATCC 700893 / DSM 11879 / JCM 9820 / NBRC 100138 / K1), this protein is UPF0147 protein APE_2336a.